The chain runs to 163 residues: Transcription antitermination protein NusB (163 aa).

The protein belongs to the NusB family.

In terms of biological role, involved in transcription antitermination. Required for transcription of ribosomal RNA (rRNA) genes. Binds specifically to the boxA antiterminator sequence of the ribosomal RNA (rrn) operons. The sequence is that of Transcription antitermination protein NusB from Mycolicibacterium vanbaalenii (strain DSM 7251 / JCM 13017 / BCRC 16820 / KCTC 9966 / NRRL B-24157 / PYR-1) (Mycobacterium vanbaalenii).